Consider the following 372-residue polypeptide: Aminomethyltransferase (372 aa).

The protein belongs to the GcvT family. As to quaternary structure, the glycine cleavage system is composed of four proteins: P, T, L and H.

It carries out the reaction N(6)-[(R)-S(8)-aminomethyldihydrolipoyl]-L-lysyl-[protein] + (6S)-5,6,7,8-tetrahydrofolate = N(6)-[(R)-dihydrolipoyl]-L-lysyl-[protein] + (6R)-5,10-methylene-5,6,7,8-tetrahydrofolate + NH4(+). Its function is as follows. The glycine cleavage system catalyzes the degradation of glycine. This chain is Aminomethyltransferase, found in Streptomyces coelicolor (strain ATCC BAA-471 / A3(2) / M145).